The chain runs to 502 residues: ATP synthase subunit alpha (502 aa).

Positions Val115 to Arg139 are disordered. Position 169–176 (Gly169–Thr176) interacts with ATP.

Belongs to the ATPase alpha/beta chains family. In terms of assembly, F-type ATPases have 2 components, CF(1) - the catalytic core - and CF(0) - the membrane proton channel. CF(1) has five subunits: alpha(3), beta(3), gamma(1), delta(1), epsilon(1). CF(0) has three main subunits: a(1), b(2) and c(9-12). The alpha and beta chains form an alternating ring which encloses part of the gamma chain. CF(1) is attached to CF(0) by a central stalk formed by the gamma and epsilon chains, while a peripheral stalk is formed by the delta and b chains.

Its subcellular location is the cell membrane. It catalyses the reaction ATP + H2O + 4 H(+)(in) = ADP + phosphate + 5 H(+)(out). Functionally, produces ATP from ADP in the presence of a proton gradient across the membrane. The alpha chain is a regulatory subunit. The sequence is that of ATP synthase subunit alpha from Geobacillus thermodenitrificans (strain NG80-2).